A 932-amino-acid polypeptide reads, in one-letter code: Glycine dehydrogenase (decarboxylating) (932 aa).

Lysine 685 carries the N6-(pyridoxal phosphate)lysine modification.

This sequence belongs to the GcvP family. As to quaternary structure, the glycine cleavage system is composed of four proteins: P, T, L and H. Pyridoxal 5'-phosphate serves as cofactor.

It catalyses the reaction N(6)-[(R)-lipoyl]-L-lysyl-[glycine-cleavage complex H protein] + glycine + H(+) = N(6)-[(R)-S(8)-aminomethyldihydrolipoyl]-L-lysyl-[glycine-cleavage complex H protein] + CO2. Functionally, the glycine cleavage system catalyzes the degradation of glycine. The P protein binds the alpha-amino group of glycine through its pyridoxal phosphate cofactor; CO(2) is released and the remaining methylamine moiety is then transferred to the lipoamide cofactor of the H protein. The polypeptide is Glycine dehydrogenase (decarboxylating) (Brucella melitensis biotype 2 (strain ATCC 23457)).